The sequence spans 459 residues: 5-hydroxytryptamine receptor 2C (459 aa).

Residues M1–A32 form the signal peptide. Residues I33 to W56 lie on the Extracellular side of the membrane. The helical transmembrane segment at P57–M81 threads the bilayer. The Cytoplasmic portion of the chain corresponds to E82–N87. A helical transmembrane segment spans residues A88–L112. The Extracellular portion of the chain corresponds to L113–P129. C128 and C208 are joined by a disulfide. A helical transmembrane segment spans residues V130–D152. T140 serves as a coordination point for ergotamine. A DRY motif; important for ligand-induced conformation changes motif is present at residues D152 to Y154. Topologically, residues R153 to S168 are cytoplasmic. A helical transmembrane segment spans residues R169–I190. At P191–N214 the chain is on the extracellular side. N-linked (GlcNAc...) asparagine glycans are attached at residues N204 and N205. L210 provides a ligand contact to ergotamine. Residues F215–L237 form a helical membrane-spanning segment. Topologically, residues T238–K312 are cytoplasmic. Residues D274–Q302 are disordered. Over residues P288–R298 the composition is skewed to basic residues. The helical transmembrane segment at V313–L337 threads the bilayer. Cysteines 338 and 342 form a disulfide. The Extracellular portion of the chain corresponds to C338–E348. The helical transmembrane segment at K349–L371 threads the bilayer. Residues N365 to Y369 carry the NPxxY motif; important for ligand-induced conformation changes and signaling motif. Topologically, residues F372–V459 are cytoplasmic. The short motif at S457–V459 is the PDZ-binding element.

The protein belongs to the G-protein coupled receptor 1 family. Interacts with MPDZ. Interacts with ARRB2. Interacts with MPP3; this interaction stabilizes the receptor at the plasma membrane and prevents the desensitization of the HTR2C receptor-mediated calcium response. Detected in brain cortex, hypothalamus, brainstem and arcuate nucleus. Detected in the paraventricular nucleus of the hypothalamus.

The protein resides in the cell membrane. G-protein coupled receptor for 5-hydroxytryptamine (serotonin). Also functions as a receptor for various drugs and psychoactive substances, including ergot alkaloid derivatives, 1-2,5,-dimethoxy-4-iodophenyl-2-aminopropane (DOI) and lysergic acid diethylamide (LSD). Ligand binding causes a conformation change that triggers signaling via guanine nucleotide-binding proteins (G proteins) and modulates the activity of downstream effectors. HTR2C is coupled to G(q)/G(11) G alpha proteins and activates phospholipase C-beta, releasing diacylglycerol (DAG) and inositol 1,4,5-trisphosphate (IP3) second messengers that modulate the activity of phosphatidylinositol 3-kinase and promote the release of Ca(2+) ions from intracellular stores, respectively. Beta-arrestin family members inhibit signaling via G proteins and mediate activation of alternative signaling pathways. Regulates neuronal activity via the activation of short transient receptor potential calcium channels in the brain, and thereby modulates the activation of pro-opiomelanocortin neurons and the release of CRH that then regulates the release of corticosterone. Plays a role in the regulation of appetite and eating behavior, responses to anxiogenic stimuli and stress. Plays a role in insulin sensitivity and glucose homeostasis. The sequence is that of 5-hydroxytryptamine receptor 2C from Mus musculus (Mouse).